The chain runs to 508 residues: Prenylcysteine oxidase 1 (508 aa).

The first 31 residues, 1–31, serve as a signal peptide directing secretion; that stretch reads MDPAAPGLACSILRLGLGLLLLCSWWYPGSA. N-linked (GlcNAc...) asparagine glycans are attached at residues N199, N291, and N356.

It belongs to the prenylcysteine oxidase family. FAD serves as cofactor.

The protein resides in the lysosome. The catalysed reaction is an S-polyprenyl-L-cysteine + O2 + H2O = a polyprenal + L-cysteine + H2O2. It catalyses the reaction S-(2E,6E)-farnesyl-L-cysteine + O2 + H2O = (2E,6E)-farnesal + L-cysteine + H2O2. It carries out the reaction [(2E,6E,10E)-geranylgeranyl]-L-cysteine + O2 + H2O = (2E,6E,10E)-geranylgeranial + L-cysteine + H2O2. Functionally, prenylcysteine oxidase that cleaves the thioether bond of prenyl-L-cysteines, such as farnesylcysteine and geranylgeranylcysteine. Only active against free prenylcysteines and not prenylcysteine residues within prenylated proteins or peptides. Involved in the final step in the degradation of prenylated proteins, by degrading prenylcysteines after the protein has been degraded. The chain is Prenylcysteine oxidase 1 from Bos taurus (Bovine).